The primary structure comprises 230 residues: Ion-translocating oxidoreductase complex subunit E (230 aa).

Helical transmembrane passes span 18–38, 39–59, 63–83, 86–106, 125–145, and 182–202; these read ALVQLLGLCPLLAVTSTATNA, LGLGLATTLVLTLTNLTVSAL, TPAEIRIPIYVMIIASVVSAV, LINAYAFGLYQSLGIFIPLIV, WLSALDGFSIGMGATGAMFVL, and PFLLAMLPPGAFIGLGLMLAV.

The protein belongs to the NqrDE/RnfAE family. The complex is composed of six subunits: RsxA, RsxB, RsxC, RsxD, RsxE and RsxG.

It localises to the cell inner membrane. In terms of biological role, part of a membrane-bound complex that couples electron transfer with translocation of ions across the membrane. Required to maintain the reduced state of SoxR. In Salmonella agona (strain SL483), this protein is Ion-translocating oxidoreductase complex subunit E.